The primary structure comprises 127 residues: Unclassified hydrophobin 5 (127 aa).

The N-terminal stretch at 1–24 (MFNKQTNAIVLLFTFALFATLAVA) is a signal peptide. 4 disulfide bridges follow: C39–C107, C46–C101, C47–C92, and C108–C121.

It belongs to the fungal hydrophobin family. Self-assembles to form functional amyloid fibrils called rodlets. Self-assembly into fibrillar rodlets occurs spontaneously at hydrophobic:hydrophilic interfaces and the rodlets further associate laterally to form amphipathic monolayers.

Its subcellular location is the secreted. It localises to the cell wall. Functionally, aerial growth, conidiation, and dispersal of filamentous fungi in the environment rely upon a capability of their secreting small amphipathic proteins called hydrophobins (HPBs) with low sequence identity. Class I can self-assemble into an outermost layer of rodlet bundles on aerial cell surfaces, conferring cellular hydrophobicity that supports fungal growth, development and dispersal; whereas Class II form highly ordered films at water-air interfaces through intermolecular interactions but contribute nothing to the rodlet structure. This is Unclassified hydrophobin 5 from Pleurotus ostreatus (strain PC15) (Oyster mushroom).